A 72-amino-acid chain; its full sequence is Translation initiation factor IF-1 (72 aa).

Positions 1–72 constitute an S1-like domain; sequence MAKDDVIQMQ…SRARIVFRAK (72 aa).

Belongs to the IF-1 family. Component of the 30S ribosomal translation pre-initiation complex which assembles on the 30S ribosome in the order IF-2 and IF-3, IF-1 and N-formylmethionyl-tRNA(fMet); mRNA recruitment can occur at any time during PIC assembly.

Its subcellular location is the cytoplasm. Its function is as follows. One of the essential components for the initiation of protein synthesis. Stabilizes the binding of IF-2 and IF-3 on the 30S subunit to which N-formylmethionyl-tRNA(fMet) subsequently binds. Helps modulate mRNA selection, yielding the 30S pre-initiation complex (PIC). Upon addition of the 50S ribosomal subunit IF-1, IF-2 and IF-3 are released leaving the mature 70S translation initiation complex. This Burkholderia mallei (strain NCTC 10247) protein is Translation initiation factor IF-1.